Consider the following 336-residue polypeptide: Aspartate--ammonia ligase (336 aa).

It belongs to the class-II aminoacyl-tRNA synthetase family. AsnA subfamily.

The protein resides in the cytoplasm. The catalysed reaction is L-aspartate + NH4(+) + ATP = L-asparagine + AMP + diphosphate + H(+). It participates in amino-acid biosynthesis; L-asparagine biosynthesis; L-asparagine from L-aspartate (ammonia route): step 1/1. This Limosilactobacillus reuteri (strain DSM 20016) (Lactobacillus reuteri) protein is Aspartate--ammonia ligase.